The chain runs to 96 residues: Co-chaperonin GroES (96 aa).

Belongs to the GroES chaperonin family. As to quaternary structure, heptamer of 7 subunits arranged in a ring. Interacts with the chaperonin GroEL.

It is found in the cytoplasm. Together with the chaperonin GroEL, plays an essential role in assisting protein folding. The GroEL-GroES system forms a nano-cage that allows encapsulation of the non-native substrate proteins and provides a physical environment optimized to promote and accelerate protein folding. GroES binds to the apical surface of the GroEL ring, thereby capping the opening of the GroEL channel. The polypeptide is Co-chaperonin GroES (Shewanella pealeana (strain ATCC 700345 / ANG-SQ1)).